The following is a 163-amino-acid chain: ATP synthase subunit b 1 (163 aa).

Residues 5 to 25 (FDATFFAFVGLVLFLALVVYL) traverse the membrane as a helical segment.

This sequence belongs to the ATPase B chain family. In terms of assembly, F-type ATPases have 2 components, F(1) - the catalytic core - and F(0) - the membrane proton channel. F(1) has five subunits: alpha(3), beta(3), gamma(1), delta(1), epsilon(1). F(0) has three main subunits: a(1), b(2) and c(10-14). The alpha and beta chains form an alternating ring which encloses part of the gamma chain. F(1) is attached to F(0) by a central stalk formed by the gamma and epsilon chains, while a peripheral stalk is formed by the delta and b chains.

It is found in the cell inner membrane. Functionally, f(1)F(0) ATP synthase produces ATP from ADP in the presence of a proton or sodium gradient. F-type ATPases consist of two structural domains, F(1) containing the extramembraneous catalytic core and F(0) containing the membrane proton channel, linked together by a central stalk and a peripheral stalk. During catalysis, ATP synthesis in the catalytic domain of F(1) is coupled via a rotary mechanism of the central stalk subunits to proton translocation. Its function is as follows. Component of the F(0) channel, it forms part of the peripheral stalk, linking F(1) to F(0). The protein is ATP synthase subunit b 1 of Rhizobium leguminosarum bv. trifolii (strain WSM2304).